Reading from the N-terminus, the 302-residue chain is Probable alpha-L-glutamate ligase (302 aa).

Residues 104 to 287 form the ATP-grasp domain; that stretch reads LQLLSRKGVG…VAGLLIKFIE (184 aa). Residues lysine 141, 178 to 179, aspartate 187, and 211 to 213 contribute to the ATP site; these read EY and RSN. Mg(2+)-binding residues include aspartate 248, glutamate 260, and asparagine 262. The Mn(2+) site is built by aspartate 248, glutamate 260, and asparagine 262.

It belongs to the RimK family. Mg(2+) is required as a cofactor. Mn(2+) serves as cofactor.

This chain is Probable alpha-L-glutamate ligase, found in Alcanivorax borkumensis (strain ATCC 700651 / DSM 11573 / NCIMB 13689 / SK2).